The primary structure comprises 227 residues: DNA mismatch repair protein MutH (227 aa).

The protein belongs to the MutH family.

The protein resides in the cytoplasm. Functionally, sequence-specific endonuclease that cleaves unmethylated GATC sequences. It is involved in DNA mismatch repair. The chain is DNA mismatch repair protein MutH from Vibrio vulnificus (strain CMCP6).